The chain runs to 427 residues: Trigger factor (427 aa).

The region spanning 160–240 (GDTLIGDVTK…VKEVKRLELP (81 aa)) is the PPIase FKBP-type domain.

The protein belongs to the FKBP-type PPIase family. Tig subfamily.

It is found in the cytoplasm. It carries out the reaction [protein]-peptidylproline (omega=180) = [protein]-peptidylproline (omega=0). Involved in protein export. Acts as a chaperone by maintaining the newly synthesized protein in an open conformation. Functions as a peptidyl-prolyl cis-trans isomerase. This is Trigger factor from Chlorobaculum parvum (strain DSM 263 / NCIMB 8327) (Chlorobium vibrioforme subsp. thiosulfatophilum).